Consider the following 196-residue polypeptide: Chromophore lyase CpcS/CpeS 2 (196 aa).

This sequence belongs to the CpcS/CpeS biliprotein lyase family.

Functionally, covalently attaches a chromophore to Cys residue(s) of phycobiliproteins. The chain is Chromophore lyase CpcS/CpeS 2 from Trichodesmium erythraeum (strain IMS101).